A 242-amino-acid polypeptide reads, in one-letter code: ATP synthase subunit a (242 aa).

Helical transmembrane passes span 21–41 (LSSIMMLIITAVIVFVIAIIC), 79–99 (FHFLAVTLIFFIFVSNMLGLP), 116–136 (DATVTLTLSTLIILLTHFYGV), 173–193 (LYGNIFAGELLLGLLAGLVTG), and 198–218 (AWGWIIGLPGLVVWQGFSIFI).

Belongs to the ATPase A chain family. F-type ATPases have 2 components, CF(1) - the catalytic core - and CF(0) - the membrane proton channel. CF(1) has five subunits: alpha(3), beta(3), gamma(1), delta(1), epsilon(1). CF(0) has three main subunits: a(1), b(2) and c(9-12). The alpha and beta chains form an alternating ring which encloses part of the gamma chain. CF(1) is attached to CF(0) by a central stalk formed by the gamma and epsilon chains, while a peripheral stalk is formed by the delta and b chains.

It localises to the cell membrane. Its function is as follows. Key component of the proton channel; it plays a direct role in the translocation of protons across the membrane. The sequence is that of ATP synthase subunit a from Staphylococcus saprophyticus subsp. saprophyticus (strain ATCC 15305 / DSM 20229 / NCIMB 8711 / NCTC 7292 / S-41).